The following is a 490-amino-acid chain: ATP synthase subunit alpha 1 (490 aa).

The protein belongs to the ATPase alpha/beta chains family. F-type ATPases have 2 components, CF(1) - the catalytic core - and CF(0) - the membrane proton channel. CF(1) has five subunits: alpha(3), beta(3), gamma(1), delta(1), epsilon(1). CF(0) has three main subunits: a(1), b(2) and c(9-12). The alpha and beta chains form an alternating ring which encloses part of the gamma chain. CF(1) is attached to CF(0) by a central stalk formed by the gamma and epsilon chains, while a peripheral stalk is formed by the delta and b chains.

The protein localises to the cell inner membrane. It catalyses the reaction ATP + H2O + 4 H(+)(in) = ADP + phosphate + 5 H(+)(out). Functionally, produces ATP from ADP in the presence of a proton gradient across the membrane. The alpha chain is a regulatory subunit. This is ATP synthase subunit alpha 1 from Legionella pneumophila (strain Paris).